Here is a 107-residue protein sequence, read N- to C-terminus: Bombesin (107 aa).

A signal peptide spans 1 to 26; it reads MSAIPLNRILPLGFLLIFSFISLSSC. Residues 27–41 constitute a propeptide that is removed on maturation; it reads MEFVEDPNNQGGLNL. At glutamine 42 the chain carries Pyrrolidone carboxylic acid. Methionine 55 bears the Methionine amide mark. Residues 56–107 constitute a propeptide that is removed on maturation; sequence GKKSLQDTDFEEMESFAKRNVENMKAESERELRHAQLVVRNILEQYLKNMQN.

In terms of tissue distribution, expressed by the skin glands.

Its subcellular location is the secreted. Its function is as follows. Stimulates smooth muscle contraction. Role in induction of hypothermia, stimulation of DNA replication and release of many gastrointestinal hormones. Possesses insulin-releasing activity. The polypeptide is Bombesin (Bombina variegata (Yellow-bellied toad)).